We begin with the raw amino-acid sequence, 223 residues long: UPF0502 protein Sbal_1765 (223 aa).

This sequence belongs to the UPF0502 family.

The polypeptide is UPF0502 protein Sbal_1765 (Shewanella baltica (strain OS155 / ATCC BAA-1091)).